The sequence spans 104 residues: Alpha-amylase inhibitor HOE-467A (104 aa).

Residues 1–30 (MRVRALRLAALVGAGAALALSPLAAGPASA) form the signal peptide. Disulfide bonds link C41–C57 and C75–C103.

Inhibits mammalian alpha-amylases specifically but has no action on plant and microbial alpha-amylases. Forms a tight stoichiometric 1:1 complex with alpha-amylase. The polypeptide is Alpha-amylase inhibitor HOE-467A (Streptomyces tendae).